Reading from the N-terminus, the 149-residue chain is Chromophore lyase CpcS/CpeS homolog (149 aa).

The protein belongs to the CpcS/CpeS biliprotein lyase family.

It is found in the plastid. It localises to the chloroplast. Might function to covalently attach a chromophore to Cys residue(s) of phycobiliproteins. In Pyropia yezoensis (Susabi-nori), this protein is Chromophore lyase CpcS/CpeS homolog.